We begin with the raw amino-acid sequence, 123 residues long: UPF0738 protein BcerKBAB4_1107 (123 aa).

Belongs to the UPF0738 family.

The polypeptide is UPF0738 protein BcerKBAB4_1107 (Bacillus mycoides (strain KBAB4) (Bacillus weihenstephanensis)).